The primary structure comprises 662 residues: DNA topoisomerase 4 subunit B (662 aa).

Residues Tyr-20, Asn-60, Asp-87, 129-135 (GLHGVGI), and Lys-359 contribute to the ATP site. The Toprim domain maps to 439–553 (TELFIVEGDS…EGHLYLAKPP (115 aa)). Residues Glu-445, Asp-518, and Asp-520 each contribute to the Mg(2+) site.

This sequence belongs to the type II topoisomerase family. ParE type 1 subfamily. As to quaternary structure, heterotetramer composed of ParC and ParE. Requires Mg(2+) as cofactor. It depends on Mn(2+) as a cofactor. Ca(2+) serves as cofactor.

The enzyme catalyses ATP-dependent breakage, passage and rejoining of double-stranded DNA.. Topoisomerase IV is essential for chromosome segregation. It relaxes supercoiled DNA. Performs the decatenation events required during the replication of a circular DNA molecule. The chain is DNA topoisomerase 4 subunit B from Rickettsia felis (strain ATCC VR-1525 / URRWXCal2) (Rickettsia azadi).